The following is an 81-amino-acid chain: Short neurotoxin 2 (81 aa).

A signal peptide spans methionine 1–threonine 21. Cystine bridges form between cysteine 24–cysteine 43, cysteine 38–cysteine 60, cysteine 62–cysteine 73, and cysteine 74–cysteine 79.

The protein belongs to the three-finger toxin family. Short-chain subfamily. Type I alpha-neurotoxin sub-subfamily. As to expression, expressed by the venom gland.

The protein resides in the secreted. Functionally, binds to muscle nicotinic acetylcholine receptor (nAChR) and inhibit acetylcholine from binding to the receptor, thereby impairing neuromuscular transmission. This chain is Short neurotoxin 2, found in Drysdalia coronoides (White-lipped snake).